A 982-amino-acid chain; its full sequence is Collagen alpha-1(I) chain (982 aa).

The tract at residues 1–982 (GPMGPSGPRG…PGAPGPPGPP (982 aa)) is disordered. A compositionally biased stretch (low complexity) spans 8–27 (PRGFQGPPGEPGEPGASGPM). Over residues 39–53 (NGDDGEAGKPGRPGE) the composition is skewed to basic and acidic residues. Serine 81 carries the phosphoserine modification. Low complexity-rich tracts occupy residues 89 to 105 (DAGP…PGEN) and 128 to 141 (PAGA…TGAA). Residues 143-155 (PPGPTGPAGPPGF) are compositionally biased toward pro residues. Residues 189–228 (AGAAGPAGNPGADGQPGAKGANGAPGIAGAPGFPGARGPS) show a composition bias toward low complexity. Gly residues predominate over residues 294–303 (GERGGPGSRG). Low complexity-rich tracts occupy residues 304-335 (FPGA…PGEA), 347-373 (KGIT…QDGR), 382-401 (ARGQ…AGEP), 425-437 (AGAQ…AGPA), 513-526 (APGA…PGIQ), 583-597 (SGPS…ARGA), 610-640 (AGFA…AGPA), 666-682 (SAGP…AGRV), and 727-751 (AGEK…QGIA). Serine 586 carries the phosphoserine modification. Composition is skewed to pro residues over residues 792-802 (PPGPIGPPGIA) and 838-853 (AGPP…PGPV). A compositionally biased stretch (low complexity) spans 874–888 (IGPTGARGPAGPQGP). Basic and acidic residues predominate over residues 889–900 (RGDKGETGEQGD). The span at 916–940 (PGEQGPAGASGPAGPRGPPGSAGAP) shows a compositional bias: low complexity. Positions 966–982 (PRGPPGPPGAPGPPGPP) are enriched in pro residues.

Belongs to the fibrillar collagen family. As to quaternary structure, trimers of one alpha 2(I) and two alpha 1(I) chains. In terms of processing, prolines at the third position of the tripeptide repeating unit (G-X-Y) are hydroxylated in some or all of the chains. In terms of tissue distribution, forms the fibrils of tendon, ligaments and bones. In bones, the fibrils are mineralized with calcium hydroxyapatite.

It is found in the secreted. It localises to the extracellular space. The protein localises to the extracellular matrix. Type I collagen is a member of group I collagen (fibrillar forming collagen). The sequence is that of Collagen alpha-1(I) chain from Toxodon sp.